The chain runs to 442 residues: Transcriptional coactivator YAP1 (442 aa).

Residues S21, S69, and S87 each carry the phosphoserine; by LATS1 and LATS2 modification. Disordered regions lie at residues 51-89 (LPDS…HSSP) and 97-116 (VSPG…QHLR). S119 is modified (phosphoserine; by LATS1 and LATS2). WW domains are found at residues 126 to 159 (MPLP…DPRK) and 186 to 219 (GPLP…DPRL). A disordered region spans residues 230–254 (ISQSAPVKQGSQLPSSPQSGVMSGN). A compositionally biased stretch (low complexity) spans 238 to 249 (QGSQLPSSPQSG). Positions 247-442 (QSGVMSGNNP…IDKENFLTWL (196 aa)) are transactivation domain. A coiled-coil region spans residues 258–279 (RLQQIHIEKERLRIKQELLRQR). The segment at 286–374 (RNQLPTSMEQ…DTLGPGSMAT (89 aa)) is disordered. Composition is skewed to polar residues over residues 288–304 (QLPT…NPVS), 313–329 (RNMT…SGTY), and 337–347 (DSGLSMSSYSV).

Belongs to the YAP1 family. In terms of processing, phosphorylated by lats1 and lats2; leading to cytoplasmic translocation and inactivation. As to expression, expressed in the notochord, brain, eyes, branchial arches and pectoral fins.

It is found in the cytoplasm. The protein localises to the nucleus. It localises to the cell junction. Its subcellular location is the tight junction. The protein resides in the cell membrane. Its function is as follows. Transcriptional regulator which can act both as a coactivator and a corepressor and is the critical downstream regulatory target in the Hippo signaling pathway that plays a pivotal role in organ size control and tumor suppression by restricting proliferation and promoting apoptosis. Required for expansion of the neural plate and neural plate border zone progenitor pools. Acts as a direct regulator of pax3 expression via interaction with tead1. Plays a key role in tissue tension and 3D tissue shape by regulating cortical actomyosin network formation. The protein is Transcriptional coactivator YAP1 (yap1) of Danio rerio (Zebrafish).